We begin with the raw amino-acid sequence, 486 residues long: Galactose-1-phosphate uridylyltransferase (486 aa).

The protein belongs to the galactose-1-phosphate uridylyltransferase type 2 family.

The protein localises to the cytoplasm. It catalyses the reaction alpha-D-galactose 1-phosphate + UDP-alpha-D-glucose = alpha-D-glucose 1-phosphate + UDP-alpha-D-galactose. It functions in the pathway carbohydrate metabolism; galactose metabolism. The polypeptide is Galactose-1-phosphate uridylyltransferase (Pediococcus pentosaceus (strain ATCC 25745 / CCUG 21536 / LMG 10740 / 183-1w)).